A 220-amino-acid chain; its full sequence is Early protein OPG038 (220 aa).

The first 17 residues, 1–17 (MVYKLVLLFCIASLGYS), serve as a signal peptide directing secretion. Asn49, Asn79, Asn118, and Asn154 each carry an N-linked (GlcNAc...) asparagine; by host glycan.

This sequence belongs to the orthopoxvirus OPG038 family. Homooligomer. Interacts with host CD80 and CD86 when secreted. Glycosylated by host.

The protein localises to the host endoplasmic reticulum. The protein resides in the secreted. Plays a role in immune evasion. When secreted, inhibits T-cell activation by preventing the binding of host CD80 and CD86 to soluble CTLA4 and CD28. In the infected cell, may inhibits host NF kappa B activation. This chain is Early protein OPG038 (OPG038), found in Bos taurus (Bovine).